The sequence spans 419 residues: Putative zinc metalloprotease spyM18_2031 (419 aa).

His18 is a binding site for Zn(2+). The active site involves Glu19. His22 contacts Zn(2+). The next 4 helical transmembrane spans lie at Leu169–Val191, Leu301–Asn323, Leu343–Ile365, and Ala392–Trp411. Residues Gly175–Lys274 form the PDZ domain.

This sequence belongs to the peptidase M50B family. It depends on Zn(2+) as a cofactor.

Its subcellular location is the cell membrane. In Streptococcus pyogenes serotype M18 (strain MGAS8232), this protein is Putative zinc metalloprotease spyM18_2031.